A 427-amino-acid chain; its full sequence is 12-alpha,13-alpha-dihydroxyfumitremorgin C prenyltransferase (427 aa).

Glutamate 94 serves as a coordination point for substrate. The dimethylallyl diphosphate site is built by arginine 105, lysine 192, tyrosine 194, tyrosine 268, glutamine 353, tyrosine 355, tyrosine 419, and tyrosine 423.

This sequence belongs to the tryptophan dimethylallyltransferase family.

It carries out the reaction 12alpha,13alpha-dihydroxyfumitremorgin C + dimethylallyl diphosphate = fumitremorgin B + diphosphate. Its pathway is mycotoxin biosynthesis. 12-alpha,13-alpha-dihydroxyfumitremorgin C prenyltransferase; part of the gene cluster that mediates the biosynthesis of fumitremorgins, indole alkaloids that carry not only intriguing chemical structures, but also interesting biological and pharmacological activities. The biosynthesis of fumitremorgin-type alkaloids begins by condensation of the two amino acids L-tryptophan and L-proline to brevianamide F, catalyzed by the non-ribosomal peptide synthetase ftmA. Brevianamide F is then prenylated by the prenyltransferase ftmPT1/ftmB in the presence of dimethylallyl diphosphate, resulting in the formation of tryprostatin B. The three cytochrome P450 monooxygenases, ftmP450-1/ftmC, ftmP450-2/ftmE and ftmP450-3/FtmG, are responsible for the conversion of tryprostatin B to 6-hydroxytryprostatin B, tryprostatin A to fumitremorgin C and fumitremorgin C to 12,13-dihydroxyfumitremorgin C, respectively. The putative methyltransferase ftmMT/ftmD is expected for the conversion of 6-hydroxytryprostatin B to tryprostatin A. FtmPT2/FtmH catalyzes the prenylation of 12,13-dihydroxyfumitre-morgin C in the presence of dimethylallyl diphosphate, resulting in the formation of fumitremorgin B. Fumitremorgin B is further converted to verruculogen by ftmOx1/ftmF via the insertion of an endoperoxide bond between the two prenyl moieties. In some fungal species, verruculogen is further converted to fumitremorgin A, but the enzymes involved in this step have not been identified yet. This chain is 12-alpha,13-alpha-dihydroxyfumitremorgin C prenyltransferase, found in Aspergillus fumigatus (strain ATCC MYA-4609 / CBS 101355 / FGSC A1100 / Af293) (Neosartorya fumigata).